We begin with the raw amino-acid sequence, 111 residues long: Cytochrome c 2.1 (111 aa).

S2 bears the N-acetylserine mark. Heme c-binding residues include C20, C23, H24, and M85.

The protein belongs to the cytochrome c family. In terms of processing, binds 1 heme c group covalently per subunit.

It localises to the mitochondrion intermembrane space. Its function is as follows. Electron carrier protein. The oxidized form of the cytochrome c heme group can accept an electron from the heme group of the cytochrome c1 subunit of cytochrome reductase. Cytochrome c then transfers this electron to the cytochrome oxidase complex, the final protein carrier in the mitochondrial electron-transport chain. In Caenorhabditis elegans, this protein is Cytochrome c 2.1 (cyc-2.1).